We begin with the raw amino-acid sequence, 390 residues long: S-adenosylmethionine synthase (390 aa).

Histidine 15 contacts ATP. Aspartate 17 contributes to the Mg(2+) binding site. Glutamate 43 lines the K(+) pocket. Residues glutamate 56 and glutamine 99 each coordinate L-methionine. Positions glutamine 99–arginine 109 are flexible loop. ATP-binding positions include aspartate 164–lysine 166, arginine 230–phenylalanine 231, aspartate 239, arginine 245–lysine 246, alanine 262, and lysine 266. Aspartate 239 provides a ligand contact to L-methionine. Lysine 270 lines the L-methionine pocket.

Belongs to the AdoMet synthase family. Homotetramer; dimer of dimers. Mg(2+) is required as a cofactor. It depends on K(+) as a cofactor.

The protein localises to the cytoplasm. The enzyme catalyses L-methionine + ATP + H2O = S-adenosyl-L-methionine + phosphate + diphosphate. It participates in amino-acid biosynthesis; S-adenosyl-L-methionine biosynthesis; S-adenosyl-L-methionine from L-methionine: step 1/1. In terms of biological role, catalyzes the formation of S-adenosylmethionine (AdoMet) from methionine and ATP. The overall synthetic reaction is composed of two sequential steps, AdoMet formation and the subsequent tripolyphosphate hydrolysis which occurs prior to release of AdoMet from the enzyme. This Photorhabdus laumondii subsp. laumondii (strain DSM 15139 / CIP 105565 / TT01) (Photorhabdus luminescens subsp. laumondii) protein is S-adenosylmethionine synthase.